We begin with the raw amino-acid sequence, 519 residues long: Major facilitator superfamily domain-containing protein 8 (519 aa).

Residues M1 to S25 form a disordered region. Residues M1–R41 lie on the Cytoplasmic side of the membrane. Residues L13 to L14 carry the Dileucine internalization motif motif. A helical membrane pass occupies residues I42–W62. Residues P63–S75 are Extracellular-facing. The helical transmembrane segment at F76 to G96 threads the bilayer. Topologically, residues L97–E106 are cytoplasmic. The helical transmembrane segment at P107–V127 threads the bilayer. Residues P128 to R140 lie on the Extracellular side of the membrane. The helical transmembrane segment at G141–T161 threads the bilayer. Over S162–S174 the chain is Cytoplasmic. Residues T175–G195 form a helical membrane-spanning segment. Residues E196–T212 lie on the Extracellular side of the membrane. Residues A213–L233 traverse the membrane as a helical segment. Over R234 to Q267 the chain is Cytoplasmic. A helical transmembrane segment spans residues V268 to E288. Residues T289–D310 are Extracellular-facing. The helical transmembrane segment at G311–L331 threads the bilayer. The Cytoplasmic segment spans residues S332–R338. Residues A339–G359 form a helical membrane-spanning segment. Residues N360–H416 lie on the Extracellular side of the membrane. N-linked (GlcNAc...) asparagine glycans are attached at residues N372 and N377. The chain crosses the membrane as a helical span at residues L417–Y439. The Cytoplasmic segment spans residues T440–G452. Residues I453–I473 traverse the membrane as a helical segment. The Extracellular segment spans residues S474–R483. A helical membrane pass occupies residues W484–Y504. The Cytoplasmic segment spans residues K505–E519.

This sequence belongs to the major facilitator superfamily.

The protein localises to the endosome membrane. Its subcellular location is the lysosome membrane. The enzyme catalyses chloride(in) = chloride(out). It catalyses the reaction iodide(out) = iodide(in). The catalysed reaction is fluoride(in) = fluoride(out). Its function is as follows. Outward-rectifying chloride channel involved in endolysosomal chloride homeostasis, membrane fusion and function. Conducts chloride currents up to hundreds of picoamperes. Regulates lysosomal calcium content by reducing the lysosomal membrane potential, thereby activating TRPML1 channel and further release of lysosomal calcium ions. Regulates the pH in endolysosomal compartments and may contribute to progressive acidification from endosome to lysosome. Permeable to other halides such as iodide and fluoride ions. This is Major facilitator superfamily domain-containing protein 8 from Mus musculus (Mouse).